The sequence spans 394 residues: Autophagy-related protein 18 (394 aa).

A WD 1 repeat occupies 4–42; sequence LSNTKLNYVTFNQDHSCLAVATSRGFRIYHTDPFSKIFN. Residues 146–165 form a disordered region; the sequence is MPKPREDQGERRPAHAPPLS. The span at 148–158 shows a compositional bias: basic and acidic residues; it reads KPREDQGERRP. WD repeat units lie at residues 191 to 231 and 236 to 275; these read AHKM…KLFE and TIPS…NANA. Positions 232–236 match the L/FRRG motif motif; it reads FRRGT. The disordered stretch occupies residues 274–342; it reads NAGGAGPAAL…QSGTFGSMLR (69 aa). Positions 302 to 312 are enriched in low complexity; it reads GSEYSPSGDSD. Polar residues predominate over residues 331–342; the sequence is RRQSGTFGSMLR.

It belongs to the WD repeat PROPPIN family. Component of the PI(3,5)P2 regulatory complex.

The protein resides in the preautophagosomal structure membrane. The protein localises to the vacuole membrane. It is found in the endosome membrane. The PI(3,5)P2 regulatory complex regulates both the synthesis and turnover of phosphatidylinositol 3,5-bisphosphate (PtdIns(3,5)P2). Necessary for proper vacuole morphology. Plays an important role in osmotically-induced vacuole fragmentation. Required for cytoplasm to vacuole transport (Cvt) vesicle formation, pexophagy and starvation-induced autophagy. Involved in correct ATG9 trafficking to the pre-autophagosomal structure. Might also be involved in premeiotic DNA replication. This is Autophagy-related protein 18 (ATG18) from Chaetomium globosum (strain ATCC 6205 / CBS 148.51 / DSM 1962 / NBRC 6347 / NRRL 1970) (Soil fungus).